A 312-amino-acid chain; its full sequence is Ribose-phosphate pyrophosphokinase (312 aa).

ATP is bound by residues D34–E36 and R93–Q94. H128 and D167 together coordinate Mg(2+). Residue K191 is part of the active site. R193 and D217 together coordinate D-ribose 5-phosphate.

It belongs to the ribose-phosphate pyrophosphokinase family. Class I subfamily. Homohexamer. Requires Mg(2+) as cofactor.

Its subcellular location is the cytoplasm. The enzyme catalyses D-ribose 5-phosphate + ATP = 5-phospho-alpha-D-ribose 1-diphosphate + AMP + H(+). Its pathway is metabolic intermediate biosynthesis; 5-phospho-alpha-D-ribose 1-diphosphate biosynthesis; 5-phospho-alpha-D-ribose 1-diphosphate from D-ribose 5-phosphate (route I): step 1/1. In terms of biological role, involved in the biosynthesis of the central metabolite phospho-alpha-D-ribosyl-1-pyrophosphate (PRPP) via the transfer of pyrophosphoryl group from ATP to 1-hydroxyl of ribose-5-phosphate (Rib-5-P). In Baumannia cicadellinicola subsp. Homalodisca coagulata, this protein is Ribose-phosphate pyrophosphokinase.